We begin with the raw amino-acid sequence, 566 residues long: Sister chromatid cohesion protein 1 (566 aa).

S161 carries the phosphoserine modification. S175 carries the post-translational modification Phosphoserine; by CDC5. Position 210 is an N6-acetyllysine; by ECO1 (K210). Phosphoserine; by CDC5 is present on S263. S307 is modified (phosphoserine). The disordered stretch occupies residues 325-356 (SIQIDEETENSESIASSNTYKEERSNNLLTPQ). The residue at position 354 (T354) is a Phosphothreonine.

Belongs to the rad21 family. As to quaternary structure, interacts directly with IRR1/SCC3 in cohesin complex. Cohesin complexes are composed of the SMC1 and SMC3 heterodimer attached via their hinge domain, MCD1/SCC1 which link them, and IRR1, which interacts with MCD1. The cohesin complex also interacts with SCC2, which is required for its association with chromosomes. In terms of processing, cleaved by ESP1 at the onset of anaphase. Phosphorylated by CDC5/Polo-like kinase at the onset of anaphase. Phosphorylation takes places at proximity to cleavage sites and is required for an efficient cleavage by ESP1. Post-translationally, acetylated by ECO1.

The protein localises to the nucleus. Its subcellular location is the chromosome. It is found in the centromere. Its function is as follows. Cleavable component of the cohesin complex involved in chromosome cohesion during cell cycle. The cohesin complex is required for the cohesion of sister chromatids after DNA replication. The cohesin complex apparently forms a large proteinaceous ring within which sister chromatids can be trapped. At metaphase-anaphase transition, this protein is cleaved by ESP1 and dissociates from chromatin, allowing sister chromatids to segregate. The polypeptide is Sister chromatid cohesion protein 1 (MCD1) (Saccharomyces cerevisiae (strain ATCC 204508 / S288c) (Baker's yeast)).